Here is a 402-residue protein sequence, read N- to C-terminus: Oligopeptide transport ATP-binding protein OppD (402 aa).

The ABC transporter domain occupies 22-309 (LDITDLHVNF…PLHPYTWALI (288 aa)). Position 58–65 (58–65 (GESGSGKS)) interacts with ATP.

Belongs to the ABC transporter superfamily. As to quaternary structure, the complex is composed of two ATP-binding proteins (OppD and OppF), two transmembrane proteins (OppB and OppC) and a solute-binding protein (OppA).

The protein localises to the cell membrane. The catalysed reaction is a [peptide](out) + ATP + H2O = a [peptide](in) + ADP + phosphate + H(+). Part of the ABC transporter complex OppABCDF involved in the uptake of oligopeptides. Probably responsible for energy coupling to the transport system. This Mycoplasma genitalium (strain ATCC 33530 / DSM 19775 / NCTC 10195 / G37) (Mycoplasmoides genitalium) protein is Oligopeptide transport ATP-binding protein OppD (oppD).